Reading from the N-terminus, the 250-residue chain is 5-oxoprolinase subunit A (250 aa).

The protein belongs to the LamB/PxpA family. As to quaternary structure, forms a complex composed of PxpA, PxpB and PxpC.

The catalysed reaction is 5-oxo-L-proline + ATP + 2 H2O = L-glutamate + ADP + phosphate + H(+). Its function is as follows. Catalyzes the cleavage of 5-oxoproline to form L-glutamate coupled to the hydrolysis of ATP to ADP and inorganic phosphate. In Paraburkholderia phymatum (strain DSM 17167 / CIP 108236 / LMG 21445 / STM815) (Burkholderia phymatum), this protein is 5-oxoprolinase subunit A.